The following is a 198-amino-acid chain: 3-isopropylmalate dehydratase small subunit (198 aa).

Belongs to the LeuD family. LeuD type 1 subfamily. In terms of assembly, heterodimer of LeuC and LeuD.

It catalyses the reaction (2R,3S)-3-isopropylmalate = (2S)-2-isopropylmalate. The protein operates within amino-acid biosynthesis; L-leucine biosynthesis; L-leucine from 3-methyl-2-oxobutanoate: step 2/4. Functionally, catalyzes the isomerization between 2-isopropylmalate and 3-isopropylmalate, via the formation of 2-isopropylmaleate. In Mycobacterium marinum (strain ATCC BAA-535 / M), this protein is 3-isopropylmalate dehydratase small subunit.